A 379-amino-acid polypeptide reads, in one-letter code: Queuine tRNA-ribosyltransferase (379 aa).

Asp-93 acts as the Proton acceptor in catalysis. Substrate-binding positions include Asp-93–Phe-97, Asp-147, Gln-191, and Gly-218. Residues Gly-249–Asp-255 form an RNA binding region. The active-site Nucleophile is the Asp-268. An RNA binding; important for wobble base 34 recognition region spans residues Thr-273–Arg-277. 4 residues coordinate Zn(2+): Cys-306, Cys-308, Cys-311, and His-337.

This sequence belongs to the queuine tRNA-ribosyltransferase family. As to quaternary structure, homodimer. Within each dimer, one monomer is responsible for RNA recognition and catalysis, while the other monomer binds to the replacement base PreQ1. Requires Zn(2+) as cofactor.

The catalysed reaction is 7-aminomethyl-7-carbaguanine + guanosine(34) in tRNA = 7-aminomethyl-7-carbaguanosine(34) in tRNA + guanine. It functions in the pathway tRNA modification; tRNA-queuosine biosynthesis. Functionally, catalyzes the base-exchange of a guanine (G) residue with the queuine precursor 7-aminomethyl-7-deazaguanine (PreQ1) at position 34 (anticodon wobble position) in tRNAs with GU(N) anticodons (tRNA-Asp, -Asn, -His and -Tyr). Catalysis occurs through a double-displacement mechanism. The nucleophile active site attacks the C1' of nucleotide 34 to detach the guanine base from the RNA, forming a covalent enzyme-RNA intermediate. The proton acceptor active site deprotonates the incoming PreQ1, allowing a nucleophilic attack on the C1' of the ribose to form the product. After dissociation, two additional enzymatic reactions on the tRNA convert PreQ1 to queuine (Q), resulting in the hypermodified nucleoside queuosine (7-(((4,5-cis-dihydroxy-2-cyclopenten-1-yl)amino)methyl)-7-deazaguanosine). This chain is Queuine tRNA-ribosyltransferase, found in Mannheimia succiniciproducens (strain KCTC 0769BP / MBEL55E).